The chain runs to 310 residues: Homeobox protein Hox-A13a (310 aa).

A DNA-binding region (homeobox) is located at residues G244–V303.

This sequence belongs to the Abd-B homeobox family.

It localises to the nucleus. Functionally, sequence-specific transcription factor which is part of a developmental regulatory system that provides cells with specific positional identities on the anterior-posterior axis. The protein is Homeobox protein Hox-A13a (hoxa13a) of Danio rerio (Zebrafish).